The chain runs to 509 residues: Erythropoietin receptor (509 aa).

An N-terminal signal peptide occupies residues 1-24 (MYHFGATLWPGVGSLCLLLAGATW). Over 25-251 (APSPNSPDAK…SLLTASDLDP (227 aa)) the chain is Extracellular. 2 disulfides stabilise this stretch: C52/C62 and C91/C107. Positions 148–248 (PPAGLLARRA…EPASLLTASD (101 aa)) constitute a Fibronectin type-III domain. A glycan (N-linked (GlcNAc...) asparagine) is linked at N184. Positions 234 to 238 (WSAWS) match the WSXWS motif motif. Residues 252 to 274 (LILTLSLILVLILLLLAVLALLS) traverse the membrane as a helical segment. The Cytoplasmic segment spans residues 275 to 509 (HRRTLKQKIW…PSPPNYVTCS (235 aa)). K282 is covalently cross-linked (Glycyl lysine isopeptide (Lys-Gly) (interchain with G-Cter in ubiquitin)). Residues 283 to 291 (IWPGIPSPE) carry the Box 1 motif motif. Y369 and Y427 each carry phosphotyrosine; by JAK2. The ITIM motif motif lies at 453–458 (LKYLYL). K454 participates in a covalent cross-link: Glycyl lysine isopeptide (Lys-Gly) (interchain with G-Cter in ubiquitin). A phosphotyrosine; by JAK2 mark is found at Y455, Y457, Y469, Y486, Y490, and Y505. Positions 467-509 (TDYSSGGSQETQGGSSSGPYSNPYENSLVPAPEPSPPNYVTCS) are disordered. Low complexity predominate over residues 470–493 (SSGGSQETQGGSSSGPYSNPYENS).

The protein belongs to the type I cytokine receptor family. Type 1 subfamily. Forms homodimers on EPO stimulation. The tyrosine-phosphorylated form interacts with several SH2 domain-containing proteins including LYN, the adapter protein SH2B2, PTPN6, PTPN11, JAK2, PI3 kinases, STAT5A/B, SOCS3, CRKL. Interacts with INPP5D/SHIP1. SH2B2 binding inhibits the JAK-STAT signaling. Interacts with RHEX; this interaction occurs in a erythropoietin (EPO)-dependent manner. Interacts with ATXN2L. In terms of processing, on EPO stimulation, phosphorylated on C-terminal tyrosine residues by JAK2. The phosphotyrosine motifs are also recruitment sites for several SH2-containing proteins and adapter proteins which mediate cell proliferation. Phosphorylation on Tyr-455 is required for PTPN6 interaction, Tyr-427 for PTPN11. Tyr-427 is also required for SOCS3 binding, but Tyr-455/Tyr-457 motif is the preferred binding site. Ubiquitinated by the ECS(SOCS2) complex following ligand-binding and phosphorylation by JAK2, leading to its degradation by the proteasome. Regulation by the ECS(SOCS2) complex acts as a negative feedback loop of erythropoietin-mediated signaling pathway. Ubiquitination at Lys-282 mediates receptor internalization, whereas ubiquitination at Lys-454 promotes trafficking of activated receptors to the lysosomes for degradation. Ubiquitinated by NOSIP; appears to be either multi-monoubiquitinated or polyubiquitinated. Ubiquitination mediates proliferation and survival of EPO-dependent cells.

It localises to the cell membrane. Functionally, receptor for erythropoietin, which mediates erythropoietin-induced erythroblast proliferation and differentiation. Upon EPO stimulation, EPOR dimerizes triggering the JAK2/STAT5 signaling cascade. In some cell types, can also activate STAT1 and STAT3. May also activate the LYN tyrosine kinase. Isoform EPOR-T acts as a dominant-negative receptor of EPOR-mediated signaling. The sequence is that of Erythropoietin receptor (EPOR) from Sus scrofa (Pig).